The sequence spans 132 residues: MLAAFQQQQTRKFSPITNTSASCLNMQPNPPKISIAPSVISVIGVHMEKHKLKIKTGQNIVLSASILPIQATNKELIWSNMNSDIITIYPKGDTVTITGKSAGKAVVIVTTAEGKFRDLCVIHVQPYMTNPK.

The 71-residue stretch at 45–115 folds into the BIG2 domain; the sequence is VHMEKHKLKI…VVIVTTAEGK (71 aa).

It to B.anthracis BA1245.

This is an uncharacterized protein from Bacillus cereus (strain ATCC 14579 / DSM 31 / CCUG 7414 / JCM 2152 / NBRC 15305 / NCIMB 9373 / NCTC 2599 / NRRL B-3711).